A 241-amino-acid chain; its full sequence is Uridylate kinase (241 aa).

An ATP-binding site is contributed by 15-18; it reads KISG. An involved in allosteric activation by GTP region spans residues 23–28; the sequence is GDQGFG. Residue G57 coordinates UMP. ATP-binding residues include G58 and R62. UMP-binding positions include D77 and 138-145; that span reads TGNPYFTT. ATP is bound by residues T165, Y171, and D174.

It belongs to the UMP kinase family. Homohexamer.

Its subcellular location is the cytoplasm. It catalyses the reaction UMP + ATP = UDP + ADP. It participates in pyrimidine metabolism; CTP biosynthesis via de novo pathway; UDP from UMP (UMPK route): step 1/1. With respect to regulation, allosterically activated by GTP. Inhibited by UTP. Its function is as follows. Catalyzes the reversible phosphorylation of UMP to UDP. The chain is Uridylate kinase from Paracoccus zeaxanthinifaciens.